Reading from the N-terminus, the 146-residue chain is Hut operon positive regulatory protein (146 aa).

Belongs to the HutP family. As to quaternary structure, homohexamer.

Functionally, antiterminator that binds to cis-acting regulatory sequences on the mRNA in the presence of histidine, thereby suppressing transcription termination and activating the hut operon for histidine utilization. This chain is Hut operon positive regulatory protein, found in Bacillus cytotoxicus (strain DSM 22905 / CIP 110041 / 391-98 / NVH 391-98).